The primary structure comprises 410 residues: Pectate lyase PEL9 (410 aa).

An N-terminal signal peptide occupies residues 1-18 (MMGKSVWVFAALFPAVLA). Asp-191, Asp-215, Asp-216, and Asp-219 together coordinate Ca(2+). Asn-234 carries an N-linked (GlcNAc...) asparagine glycan. Lys-271 functions as the Proton acceptor in the catalytic mechanism. Polar residues predominate over residues 342–351 (GEAPTSLSDE). Disordered regions lie at residues 342–361 (GEAP…SWDG) and 381–410 (ERNA…DWSA).

This sequence belongs to the polysaccharide lyase 9 family. It depends on Ca(2+) as a cofactor.

It localises to the secreted. The catalysed reaction is Eliminative cleavage of (1-&gt;4)-alpha-D-galacturonan to give oligosaccharides with 4-deoxy-alpha-D-galact-4-enuronosyl groups at their non-reducing ends.. Inhibited by iron ions. Activated in presence of the surfactant polysorbate 20, while inhibited in the presence of Triton X-100 and sodium dodecyl sulfate. Inhibited in presence of the organic solvents methanol, ethanol, propan-2-ol and acetone. Functionally, presents an endo-cleaving activity on the homogalacturonan (HG) region in pectin. Active on homogalacturonan with a degree of polymerization above 4, and does not appear to be affected by the degree of methylation of the substrate. Does not degrade linear rhamnogalacturonan. This is Pectate lyase PEL9 from Emericella nidulans (strain FGSC A4 / ATCC 38163 / CBS 112.46 / NRRL 194 / M139) (Aspergillus nidulans).